The chain runs to 269 residues: MPELPEVETSRRGIEPHLVGATILHAHIRNGRLRWPVSDEIYRLSDTPVLSVQRRAKYLLLELPDGWIIIHLGMSGSLRILSEAQPAEKHDHVDLVMSNGKILRYTDPRRFGAWLWTKELEGHNVLAHLGPEPLSDEFNGEYLQQKCAKRKTAIKPWLMDNKLVVGVGNIYASESLFAAGIHPDRLASSLSKEECDLLARVIKAVLLRSIEQGGTTLKDFLQSDGKPGYFAQELQVYGRKGEPCRVCGTPVVATKHAQRATFYCRHCQK.

The active-site Schiff-base intermediate with DNA is the Pro2. Catalysis depends on Glu3, which acts as the Proton donor. Lys57 serves as the catalytic Proton donor; for beta-elimination activity. Residues His90, Arg109, and Arg150 each coordinate DNA. The FPG-type zinc finger occupies 235 to 269; that stretch reads QVYGRKGEPCRVCGTPVVATKHAQRATFYCRHCQK. Residue Arg259 is the Proton donor; for delta-elimination activity of the active site.

The protein belongs to the FPG family. Monomer. It depends on Zn(2+) as a cofactor.

The enzyme catalyses Hydrolysis of DNA containing ring-opened 7-methylguanine residues, releasing 2,6-diamino-4-hydroxy-5-(N-methyl)formamidopyrimidine.. The catalysed reaction is 2'-deoxyribonucleotide-(2'-deoxyribose 5'-phosphate)-2'-deoxyribonucleotide-DNA = a 3'-end 2'-deoxyribonucleotide-(2,3-dehydro-2,3-deoxyribose 5'-phosphate)-DNA + a 5'-end 5'-phospho-2'-deoxyribonucleoside-DNA + H(+). Its function is as follows. Involved in base excision repair of DNA damaged by oxidation or by mutagenic agents. Acts as a DNA glycosylase that recognizes and removes damaged bases. Has a preference for oxidized purines, such as 7,8-dihydro-8-oxoguanine (8-oxoG). Has AP (apurinic/apyrimidinic) lyase activity and introduces nicks in the DNA strand. Cleaves the DNA backbone by beta-delta elimination to generate a single-strand break at the site of the removed base with both 3'- and 5'-phosphates. This is Formamidopyrimidine-DNA glycosylase from Salmonella arizonae (strain ATCC BAA-731 / CDC346-86 / RSK2980).